We begin with the raw amino-acid sequence, 526 residues long: MRLRNGTVATALVFVTSFLTLSWYTTWQNGKEKLIAYQREFLALKERLRVAEHRISQRSSELNTIVQQFRRAGAETNGNNTIKLLKELTSKKSLQVPSIYYHLPHLLQNERSLQPAVQIGSGRTGVSIVMGIPTVKREVKSYLIETLHSLIDNLYPEEKLDCVIVVFIGETDLDYVHSVVANLEKEFSREISSGLLEVISPPESYYPDLTNLKETFGDSKERVRWRTKQNLDYCFLMMYAQEKGIYYIQLEDDIIVKQNYFNTIKNFALQLSSEEWMILEFSQLGFIGKMFQAPDLALVVEFILMFYKEKPIDWLLDHILWVKVCNPEKDAKHCDRQKANLRIRFRPSLFQHVGLHSSLSGKIQKLTDKDYMKPLLLKIHVNPPAEVSTSLKVYQGHTLEKTYMGEDFFWAITPTAGDYILFKFDKPVNVESYLFHSGNQEHPGDILLNTTVEVLPLKSDSLEISKETKDKRLEDGYFRIGKFEYGVAEGIVDPGLNPISAFRLSVIQNSAVWAILNEIHIKKVTS.

Residues 1 to 6 (MRLRNG) are Cytoplasmic-facing. The helical; Signal-anchor for type II membrane protein transmembrane segment at 7-27 (TVATALVFVTSFLTLSWYTTW) threads the bilayer. The stretch at 28 to 63 (QNGKEKLIAYQREFLALKERLRVAEHRISQRSSELN) forms a coiled coil. The Lumenal segment spans residues 28 to 526 (QNGKEKLIAY…NEIHIKKVTS (499 aa)). N449 carries an N-linked (GlcNAc...) asparagine glycan. Phosphoserine is present on S465.

It belongs to the glycosyltransferase 54 family. Requires a divalent metal cation as cofactor. Post-translationally, N-glycosylated.

The protein resides in the golgi apparatus membrane. It is found in the secreted. The catalysed reaction is N(4)-{beta-D-GlcNAc-(1-&gt;2)-alpha-D-Man-(1-&gt;3)-[beta-D-GlcNAc-(1-&gt;2)-alpha-D-Man-(1-&gt;6)]-beta-D-Man-(1-&gt;4)-beta-D-GlcNAc-(1-&gt;4)-beta-D-GlcNAc}-L-asparaginyl-[protein] + UDP-N-acetyl-alpha-D-glucosamine = N(4)-{beta-D-GlcNAc-(1-&gt;2)-[beta-D-GlcNAc-(1-&gt;4)]-alpha-D-Man-(1-&gt;3)-[beta-D-GlcNAc-(1-&gt;2)-alpha-D-Man-(1-&gt;6)]-beta-D-Man-(1-&gt;4)-beta-D-GlcNAc-(1-&gt;4)-beta-D-GlcNAc}-L-asparaginyl-[protein] + UDP + H(+). It catalyses the reaction an N(4)-{beta-D-GlcNAc-(1-&gt;2)-alpha-D-Man-(1-&gt;3)-[alpha-D-Man-(1-&gt;6)]-beta-D-Man-(1-&gt;4)-beta-D-GlcNAc-(1-&gt;4)-beta-D-GlcNAc}-L-asparaginyl-[protein] + UDP-N-acetyl-alpha-D-glucosamine = an N(4)-{beta-D-GlcNAc-(1-&gt;2)-[beta-D-GlcNAc-(1-&gt;4)]-alpha-D-Man-(1-&gt;3)-[alpha-D-Man-(1-&gt;6)]-beta-D-Man-(1-&gt;4)-beta-D-GlcNAc-(1-&gt;4)-beta-D-GlcNAc}-L-asparaginyl-[protein] + UDP + H(+). It carries out the reaction an N(4)-{beta-D-GlcNAc-(1-&gt;2)-alpha-D-Man-(1-&gt;3)-[beta-D-GlcNAc-(1-&gt;2)-[beta-D-GlcNAc-(1-&gt;6)]-alpha-D-Man-(1-&gt;6)]-beta-D-Man-(1-&gt;4)-beta-D-GlcNAc-(1-&gt;4)-beta-D-GlcNAc}-L-asparaginyl-[protein] + UDP-N-acetyl-alpha-D-glucosamine = an N(4)-{beta-D-GlcNAc-(1-&gt;2)-[beta-D-GlcNAc-(1-&gt;4)]-alpha-D-Man-(1-&gt;3)-[beta-D-GlcNAc-(1-&gt;2)-[beta-D-GlcNAc-(1-&gt;6)]-alpha-D-Man-(1-&gt;6)]-beta-D-Man-(1-&gt;4)-beta-D-GlcNAc-(1-&gt;4)-beta-D-GlcNAc}-L-asparaginyl-[protein] + UDP + H(+). The enzyme catalyses an N(4)-{beta-D-GlcNAc-(1-&gt;2)-alpha-D-Man-(1-&gt;3)-[beta-D-GlcNAc-(1-&gt;2)-alpha-D-Man-(1-&gt;6)]-beta-D-Man-(1-&gt;4)-beta-D-GlcNAc-(1-&gt;4)-[alpha-L-Fuc-(1-&gt;6)]-beta-D-GlcNAc}-L-asparaginyl-[protein] + UDP-N-acetyl-alpha-D-glucosamine = N(4)-{beta-D-GlcNAc-(1-&gt;2)-[beta-D-GlcNAc-(1-&gt;4)]-alpha-D-Man-(1-&gt;3)-[beta-D-GlcNAc-(1-&gt;2)-alpha-D-Man-(1-&gt;6)]-beta-D-Man-(1-&gt;4)-beta-D-GlcNAc-(1-&gt;4)-[alpha-L-Fuc-(1-&gt;6)]-beta-D-GlcNAc}-asparaginyl-[protein] + UDP + H(+). The catalysed reaction is an N(4)-{beta-D-GlcNAc-(1-&gt;2)-alpha-D-Man-(1-&gt;3)-[beta-D-Gal-(1-&gt;4)-beta-D-GlcNAc-(1-&gt;2)-alpha-D-Man-(1-&gt;6)]-beta-D-Man-(1-&gt;4)-beta-D-GlcNAc-(1-&gt;4)-beta-D-GlcNAc}-L-asparaginyl-[protein] + UDP-N-acetyl-alpha-D-glucosamine = an N(4)-{beta-D-GlcNAc-(1-&gt;2)-[beta-D-GlcNAc-(1-&gt;4)]-alpha-D-Man-(1-&gt;3)-[beta-D-Gal-(1-&gt;4)-beta-D-GlcNAc-(1-&gt;2)-alpha-D-Man-(1-&gt;6)]-beta-D-Man-(1-&gt;4)-beta-D-GlcNAc-(1-&gt;4)-beta-D-GlcNAc}-L-asparaginyl-[protein] + UDP + H(+). It catalyses the reaction N(4)-{beta-D-GlcNAc-(1-&gt;2)-alpha-D-Man-(1-&gt;3)-[alpha-D-Man-(1-&gt;3)-{alpha-D-Man-(1-&gt;6)}-alpha-D-Man-(1-&gt;6)]-beta-D-Man-(1-&gt;4)-beta-D-GlcNAc-(1-&gt;4)-beta-D-GlcNAc}-asparaginyl-[protein] + UDP-N-acetyl-alpha-D-glucosamine = N(4)-{beta-D-GlcNAc-(1-&gt;2)-[beta-D-GlcNAc-(1-&gt;4)]-alpha-D-Man-(1-&gt;3)-[alpha-D-Man-(1-&gt;3)-{alpha-D-Man-(1-&gt;6)}-alpha-D-Man-(1-&gt;6)]-beta-D-Man-(1-&gt;4)-beta-D-GlcNAc-(1-&gt;4)-beta-D-GlcNAc}-asparaginyl-[protein] + UDP + H(+). It carries out the reaction N(4)-{beta-D-GlcNAc-(1-&gt;2)-alpha-D-Man-(1-&gt;3)-beta-D-Man-(1-&gt;4)-beta-D-GlcNAc-(1-&gt;4)-beta-D-GlcNAc}-asparaginyl-[protein] + UDP-N-acetyl-alpha-D-glucosamine = N(4)-{beta-D-GlcNAc-(1-&gt;2)-[beta-D-GlcNAc-(1-&gt;4)]-alpha-D-Man-(1-&gt;3)-beta-D-Man-(1-&gt;4)-beta-D-GlcNAc-(1-&gt;4)-beta-D-GlcNAc}-asparaginyl-[protein] + UDP + H(+). It functions in the pathway protein modification; protein glycosylation. With respect to regulation, inhibited by UDP. Its function is as follows. Glycosyltransferase that catalyze the transfer of GlcNAc from UDP-GlcNAc to the GlcNAcbeta1-2Manalpha1-3 arm of the core structure of N-linked glycans through a beta1-4 linkage and participates in the production of tri- and tetra-antennary N-linked sugar chains. Involved in glucose transport by mediating SLC2A2/GLUT2 glycosylation, thereby controlling cell-surface expression of SLC2A2 in pancreatic beta cells. In Rattus norvegicus (Rat), this protein is Alpha-1,3-mannosyl-glycoprotein 4-beta-N-acetylglucosaminyltransferase A.